Here is a 146-residue protein sequence, read N- to C-terminus: Kappa-casein (146 aa).

O-linked (GalNAc...) threonine glycosylation is found at threonine 107 and threonine 112. Serine 125 is modified (phosphoserine; alternate). O-linked (GalNAc...) serine; alternate glycosylation occurs at serine 125. A glycan (O-linked (GalNAc...) threonine) is linked at threonine 142. Serine 143 carries the post-translational modification Phosphoserine.

Belongs to the kappa-casein family. In terms of tissue distribution, mammary gland specific. Secreted in milk.

It is found in the secreted. In terms of biological role, kappa-casein stabilizes micelle formation, preventing casein precipitation in milk. The polypeptide is Kappa-casein (CSN3) (Tapirus indicus (Asiatic tapir)).